Consider the following 189-residue polypeptide: Elongation factor P (189 aa).

This sequence belongs to the elongation factor P family.

It localises to the cytoplasm. It participates in protein biosynthesis; polypeptide chain elongation. Its function is as follows. Involved in peptide bond synthesis. Stimulates efficient translation and peptide-bond synthesis on native or reconstituted 70S ribosomes in vitro. Probably functions indirectly by altering the affinity of the ribosome for aminoacyl-tRNA, thus increasing their reactivity as acceptors for peptidyl transferase. The polypeptide is Elongation factor P (Chloroflexus aggregans (strain MD-66 / DSM 9485)).